A 69-amino-acid chain; its full sequence is uncharacterized protein (69 aa).

This is an uncharacterized protein from Treponema pallidum (strain Nichols).